A 221-amino-acid chain; its full sequence is MRTLTVYHLGHIDYTAAWEMQRRLARQRSSGQIGDTLLLLEHPPTITLGNKARPEHIVATPAELAARGVVVVQSDRGGEVTYHAPGQLVAYPIFKLSQHGSDVGRYVRGLEESVIRVLAGYGITGERVNGLTGVWVRGGAAKICAIGVKLSASGVTTHGLALNVDPDLSGFELIVPCGISDRGVTSLAVELGKAPPMAEVADRLIASLCAIFDLRPVNALS.

One can recognise a BPL/LPL catalytic domain in the interval 31 to 216; the sequence is GQIGDTLLLL…SLCAIFDLRP (186 aa). Substrate contacts are provided by residues 76-83, 145-147, and 159-161; these read RGGEVTYH, AIG, and GLA. Cys177 functions as the Acyl-thioester intermediate in the catalytic mechanism.

It belongs to the LipB family.

The protein resides in the cytoplasm. It carries out the reaction octanoyl-[ACP] + L-lysyl-[protein] = N(6)-octanoyl-L-lysyl-[protein] + holo-[ACP] + H(+). It functions in the pathway protein modification; protein lipoylation via endogenous pathway; protein N(6)-(lipoyl)lysine from octanoyl-[acyl-carrier-protein]: step 1/2. In terms of biological role, catalyzes the transfer of endogenously produced octanoic acid from octanoyl-acyl-carrier-protein onto the lipoyl domains of lipoate-dependent enzymes. Lipoyl-ACP can also act as a substrate although octanoyl-ACP is likely to be the physiological substrate. The protein is Octanoyltransferase of Chloroflexus aggregans (strain MD-66 / DSM 9485).